The following is a 167-amino-acid chain: Crossover junction endodeoxyribonuclease RuvC (167 aa).

Active-site residues include aspartate 7, glutamate 67, and aspartate 140. Mg(2+)-binding residues include aspartate 7, glutamate 67, and aspartate 140.

It belongs to the RuvC family. Homodimer which binds Holliday junction (HJ) DNA. The HJ becomes 2-fold symmetrical on binding to RuvC with unstacked arms; it has a different conformation from HJ DNA in complex with RuvA. In the full resolvosome a probable DNA-RuvA(4)-RuvB(12)-RuvC(2) complex forms which resolves the HJ. The cofactor is Mg(2+).

It localises to the cytoplasm. The enzyme catalyses Endonucleolytic cleavage at a junction such as a reciprocal single-stranded crossover between two homologous DNA duplexes (Holliday junction).. Functionally, the RuvA-RuvB-RuvC complex processes Holliday junction (HJ) DNA during genetic recombination and DNA repair. Endonuclease that resolves HJ intermediates. Cleaves cruciform DNA by making single-stranded nicks across the HJ at symmetrical positions within the homologous arms, yielding a 5'-phosphate and a 3'-hydroxyl group; requires a central core of homology in the junction. The consensus cleavage sequence is 5'-(A/T)TT(C/G)-3'. Cleavage occurs on the 3'-side of the TT dinucleotide at the point of strand exchange. HJ branch migration catalyzed by RuvA-RuvB allows RuvC to scan DNA until it finds its consensus sequence, where it cleaves and resolves the cruciform DNA. The sequence is that of Crossover junction endodeoxyribonuclease RuvC from Dehalococcoides mccartyi (strain ATCC BAA-2100 / JCM 16839 / KCTC 5957 / BAV1).